We begin with the raw amino-acid sequence, 483 residues long: FAD-linked oxidoreductase pgmH (483 aa).

Positions Ser-54–Gln-215 constitute an FAD-binding PCMH-type domain.

It belongs to the oxygen-dependent FAD-linked oxidoreductase family. FAD is required as a cofactor.

Its pathway is pigment biosynthesis. It participates in secondary metabolite biosynthesis. Its function is as follows. FAD-linked oxidoreductase; part of the gene cluster that mediates the biosynthesis of pleosporalin A, ascomycone A, as well as a third cryptic naphthoquinone derived pigment, all responsible for the coloration of conidia. Essential for the production of pleosporalin A, but not the 2 other final products. The pathway begins with the biosynthesis of the cyclized heptaketide 3-acetonyl-1,6,8-trihydroxy-2-naphthaldehyde by the NR-PKS pgmA. The C-6 hydroxyl group is further methylated by the O-methyltransferase pgmB to yield fusarubinaldehyde which is in turn oxidized by the cytochrome P450 monooxygenase pgmC at C-9. The C-1 hydroxyl group is then methylated spontaneously. Although pgmE, pgmD and pgmH are essential for the production of pleosporalin A, it is not the case for the 2 other final products and it remains difficult to assign a specific function to each enzyme. PgmF and pgmG seem not to be involved in pigment biosynthesis although they were regulated by the cluster-specific transcription factor pgmR. The protein is FAD-linked oxidoreductase pgmH of Aspergillus terreus (strain NIH 2624 / FGSC A1156).